A 408-amino-acid polypeptide reads, in one-letter code: Flavohemoprotein (408 aa).

Positions 1–138 constitute a Globin domain; that stretch reads MLSEKTIRIV…LADIFIGREG (138 aa). His85 serves as a coordination point for heme b. Residues Tyr95 and Glu137 each act as charge relay system in the active site. The interval 149-408 is reductase; the sequence is GGWNGTRTFV…FGPKEELVAV (260 aa). In terms of domain architecture, FAD-binding FR-type spans 152–263; sequence NGTRTFVVTK…GPPCGEFTVD (112 aa). Residues Tyr190 and 205-208 contribute to the FAD site; that span reads RNYS. 277-282 is a binding site for NADP(+); that stretch reads GIGVTP. 398–401 is an FAD binding site; the sequence is FFGP.

The protein belongs to the globin family. Two-domain flavohemoproteins subfamily. It in the C-terminal section; belongs to the flavoprotein pyridine nucleotide cytochrome reductase family. Heme b is required as a cofactor. Requires FAD as cofactor.

It catalyses the reaction 2 nitric oxide + NADPH + 2 O2 = 2 nitrate + NADP(+) + H(+). The catalysed reaction is 2 nitric oxide + NADH + 2 O2 = 2 nitrate + NAD(+) + H(+). In Rhodopirellula baltica (strain DSM 10527 / NCIMB 13988 / SH1), this protein is Flavohemoprotein.